A 2238-amino-acid chain; its full sequence is Protein Ycf2 (2238 aa).

1579–1586 (GSIGTGRS) serves as a coordination point for ATP.

This sequence belongs to the Ycf2 family.

It localises to the plastid. Probable ATPase of unknown function. Its presence in a non-photosynthetic plant (Epifagus virginiana) and experiments in tobacco indicate that it has an essential function which is probably not related to photosynthesis. This is Protein Ycf2 from Cuscuta exaltata (Tall dodder).